A 257-amino-acid chain; its full sequence is UPF0246 protein CV_1250 (257 aa).

Belongs to the UPF0246 family.

In Chromobacterium violaceum (strain ATCC 12472 / DSM 30191 / JCM 1249 / CCUG 213 / NBRC 12614 / NCIMB 9131 / NCTC 9757 / MK), this protein is UPF0246 protein CV_1250.